The chain runs to 255 residues: Putative deoxyribonuclease tatdn3-B (255 aa).

Residues H11, H13, E106, H129, H152, and D199 each coordinate Zn(2+).

Belongs to the metallo-dependent hydrolases superfamily. TatD-type hydrolase family. The cofactor is Mn(2+). Ca(2+) serves as cofactor. Requires Mg(2+) as cofactor. It depends on Zn(2+) as a cofactor.

The protein localises to the nucleus. The 3'-exonuclease activity is sensitive to the metal ion present in the active site, whereas the AP endodeoxyribonuclease activity is observed in a variety of divalent metal cofactors. 3'-exoxonuclease activity is suppressed in the presence of Ca(2+), Zn(2+) and Ni(2+). Functionally, exhibits 3'-exonuclease activities and apurinic/apyrimidinic (AP) endonuclease (in vitro). Show preferential AP endonuclease activity on double-stranded DNA substrates and 3'- exonuclease activity on single-stranded DNA. The chain is Putative deoxyribonuclease tatdn3-B (tatdn3-b) from Xenopus laevis (African clawed frog).